A 358-amino-acid polypeptide reads, in one-letter code: MLATPTIESPEEAARRAKESTLLSPRFYTTDYAAMNAIDVSSIRAEWDAMLAEYEGDNNHDHFQRTPEFAQEVAERFSQVSPELRQEFLDFLVSSVTSEFSGCVLYNEIQKNVENPDVKALMRYMARNESRHAGFINQALRDFGLGINLGGLKRTKAYTYFKPKYIFYATYLSEKIGYARYITIYRQLERHPDKRFHPIFRWFERWCNDEFRHGESFALILRAHPHLISGANLLWVRFFLLAVYATMYVRDHMRPQLHEAMGLESTDYDYRVFQITNEISKQVFPISLDIDHQAFRAGMERLVRVKTKVDAAKARGGLVGRLQQAAWAAAGAATFARMYLIPVRRHALPAQVRMAPAW.

Belongs to the AcsF family. The cofactor is Fe cation.

It catalyses the reaction Mg-protoporphyrin IX 13-monomethyl ester + 3 NADPH + 3 O2 + 2 H(+) = 3,8-divinyl protochlorophyllide a + 3 NADP(+) + 5 H2O. The protein operates within porphyrin-containing compound metabolism; chlorophyll biosynthesis. In terms of biological role, catalyzes the formation of the isocyclic ring in chlorophyll biosynthesis in aerobic conditions. Mediates the cyclase reaction, which results in the formation of divinylprotochlorophyllide (Pchlide) characteristic of all chlorophylls from magnesium-protoporphyrin IX 13-monomethyl ester (MgPMME). In Rubrivivax gelatinosus (Rhodocyclus gelatinosus), this protein is Aerobic magnesium-protoporphyrin IX monomethyl ester [oxidative] cyclase.